The chain runs to 275 residues: Ribosomal RNA small subunit methyltransferase A (275 aa).

Asn27, Leu29, Gly54, Glu76, Asp102, and Asn123 together coordinate S-adenosyl-L-methionine.

Belongs to the class I-like SAM-binding methyltransferase superfamily. rRNA adenine N(6)-methyltransferase family. RsmA subfamily.

The protein resides in the cytoplasm. It carries out the reaction adenosine(1518)/adenosine(1519) in 16S rRNA + 4 S-adenosyl-L-methionine = N(6)-dimethyladenosine(1518)/N(6)-dimethyladenosine(1519) in 16S rRNA + 4 S-adenosyl-L-homocysteine + 4 H(+). Functionally, specifically dimethylates two adjacent adenosines (A1518 and A1519) in the loop of a conserved hairpin near the 3'-end of 16S rRNA in the 30S particle. May play a critical role in biogenesis of 30S subunits. The chain is Ribosomal RNA small subunit methyltransferase A from Chelativorans sp. (strain BNC1).